Here is an 856-residue protein sequence, read N- to C-terminus: Facilitated trehalose transporter Tret1 (856 aa).

Disordered regions lie at residues 1 to 27 and 62 to 202; these read MSGR…GKLK and DPFL…KATS. Topologically, residues 1–389 are cytoplasmic; sequence MSGRDNRGAG…LEVYRPTTNP (389 aa). Polar residues predominate over residues 69–80; it reads VSPQRHPQTVRT. Over residues 133–142 the composition is skewed to basic and acidic residues; the sequence is EIREHRDRQQ. Residues 170–180 show a composition bias toward polar residues; sequence GNSNTNNNKAA. Phosphoserine is present on residues serine 247, serine 248, serine 249, serine 319, and serine 321. Residues 326–345 are disordered; it reads LTSRQHFQQQRSISTDSRKS. Polar residues predominate over residues 329 to 340; sequence RQHFQQQRSIST. The chain crosses the membrane as a helical span at residues 390-410; sequence IFIWTQVLAALSVSLGSLVVG. The Extracellular segment spans residues 411 to 439; the sequence is FVSAYTSPALVSMTDRNITSFEVTQDAGS. N-linked (GlcNAc...) asparagine glycosylation occurs at asparagine 427. Residues 440–460 traverse the membrane as a helical segment; the sequence is WVGGIMPLAGLAGGIAGGPLI. At 461-472 the chain is on the cytoplasmic side; sequence EYLGRRNTILAT. A helical membrane pass occupies residues 473-493; sequence AVPFIVSSLLIACAVNVAMVL. The Extracellular segment spans residues 494-496; that stretch reads CGR. Residues 497–517 form a helical membrane-spanning segment; it reads FLAGFCVGIASLSLPVYLGET. The Cytoplasmic portion of the chain corresponds to 518–527; it reads VQPEVRGTLG. The chain crosses the membrane as a helical span at residues 528 to 548; the sequence is LLPTAFGNIGILLCFVAGSFM. Asparagine 549 carries an N-linked (GlcNAc...) asparagine glycan. Over 549 to 551 the chain is Extracellular; it reads NWS. A helical membrane pass occupies residues 552–572; the sequence is MLAFLGAALPVPFLILMFLIP. The Cytoplasmic segment spans residues 573–635; that stretch reads ETPRWFVSRG…ELLKRNNLKP (63 aa). A helical membrane pass occupies residues 636-656; the sequence is LSISLGLMFFQQLSGINAVIF. Residues 657-672 are Extracellular-facing; it reads YTVQIFKDAGSTIDGN. A helical membrane pass occupies residues 673–693; that stretch reads ICTIIVGVVNFLATFIGIVLI. The Cytoplasmic segment spans residues 694–699; sequence DRAGRK. Residues 700–720 traverse the membrane as a helical segment; the sequence is ILLYVSNIAMILTLFVLGGFF. The Extracellular portion of the chain corresponds to 721-739; it reads YCKAHGPDVSNLGWLPLTC. A helical transmembrane segment spans residues 740-760; it reads FVIYILGFSLGFGPIPWLMMG. Over 761-766 the chain is Cytoplasmic; that stretch reads EILPAK. Residues 767–787 traverse the membrane as a helical segment; that stretch reads IRGSAASVATAFNWSCTFVVT. Residues 788-800 are Extracellular-facing; that stretch reads KTFQDLTVAMGAH. The chain crosses the membrane as a helical span at residues 801–821; the sequence is GAFWLFGAICFVGLFFVIIYV. Over 822–856 the chain is Cytoplasmic; that stretch reads PETQGKTLEDIERKMMGRVRRMSSVANIKPLSFNM. 2 positions are modified to phosphoserine: serine 844 and serine 845.

This sequence belongs to the major facilitator superfamily. Sugar transporter (TC 2.A.1.1) family. Trehalose transporter subfamily.

The protein resides in the cell membrane. Low-capacity facilitative transporter for trehalose. Does not transport maltose, sucrose or lactose. Mediates the bidirectional transfer of trehalose. Responsible for the transport of trehalose synthesized in the fat body and the incorporation of trehalose into other tissues that require a carbon source, thereby regulating trehalose levels in the hemolymph. The chain is Facilitated trehalose transporter Tret1 from Drosophila erecta (Fruit fly).